The sequence spans 316 residues: Protoheme IX farnesyltransferase (316 aa).

9 consecutive transmembrane segments (helical) span residues 28–48 (WLALLKPRVISLVVFTGAAGM), 57–77 (IPIGLITILCICIGAGAAGAI), 106–126 (AALVYGVVLSVLSVIVLWLAT), 129–149 (LAADILAFSIFFYSVIYTMWL), 156–176 (NIVIGGAAGAFPPMIGWAATM), 179–199 (MAVLPVAMFAIVFLWTPPHFW), 230–250 (ILIYTFILTAVSLVPSFVHEV), 254–274 (YTVVTSLLDLGFILCAFRVLM), and 296–316 (YSLVYLFLLFCGLLVDRVLIG).

The protein belongs to the UbiA prenyltransferase family. Protoheme IX farnesyltransferase subfamily.

It is found in the cell inner membrane. The catalysed reaction is heme b + (2E,6E)-farnesyl diphosphate + H2O = Fe(II)-heme o + diphosphate. Its pathway is porphyrin-containing compound metabolism; heme O biosynthesis; heme O from protoheme: step 1/1. Functionally, converts heme B (protoheme IX) to heme O by substitution of the vinyl group on carbon 2 of heme B porphyrin ring with a hydroxyethyl farnesyl side group. The chain is Protoheme IX farnesyltransferase from Gluconobacter oxydans (strain 621H) (Gluconobacter suboxydans).